Here is a 518-residue protein sequence, read N- to C-terminus: Ribonuclease Y (518 aa).

A helical membrane pass occupies residues 2–22 (GSIIISALLALVIGAVVGFFV). The 64-residue stretch at 208 to 271 (TVSVVNLPND…ETARIALDKL (64 aa)) folds into the KH domain. The HD domain maps to 334 to 427 (VLKHSVEVAF…VAAADALSAA (94 aa)).

It belongs to the RNase Y family.

It is found in the cell membrane. Functionally, endoribonuclease that initiates mRNA decay. In Geobacillus kaustophilus (strain HTA426), this protein is Ribonuclease Y.